Here is a 224-residue protein sequence, read N- to C-terminus: UPF0758 protein ABO_0214 (224 aa).

Residues 102-224 enclose the MPN domain; the sequence is PLDNPDKAGQ…WVSLASRGAV (123 aa). 3 residues coordinate Zn(2+): His-173, His-175, and Asp-186. A JAMM motif motif is present at residues 173–186; it reads HNHPSGVAEPSQSD.

This sequence belongs to the UPF0758 family.

In Alcanivorax borkumensis (strain ATCC 700651 / DSM 11573 / NCIMB 13689 / SK2), this protein is UPF0758 protein ABO_0214.